Reading from the N-terminus, the 422-residue chain is ATP-dependent Clp protease ATP-binding subunit ClpX 1 (422 aa).

Residues 4-57 (DRKNRESGKLLYCSFCGKSQHEVRKLIAGPAVFVCDECVELCNDIIREDLQGSE) form the ClpX-type ZB domain. Cys16, Cys19, Cys38, and Cys41 together coordinate Zn(2+). ATP is bound at residue 120-127 (PTGSGKTL).

The protein belongs to the ClpX chaperone family. Component of the ClpX-ClpP complex. Forms a hexameric ring that, in the presence of ATP, binds to fourteen ClpP subunits assembled into a disk-like structure with a central cavity, resembling the structure of eukaryotic proteasomes.

In terms of biological role, ATP-dependent specificity component of the Clp protease. It directs the protease to specific substrates. Can perform chaperone functions in the absence of ClpP. This chain is ATP-dependent Clp protease ATP-binding subunit ClpX 1, found in Methylococcus capsulatus (strain ATCC 33009 / NCIMB 11132 / Bath).